Consider the following 144-residue polypeptide: UPF0306 protein Spro_0510 (144 aa).

The protein belongs to the UPF0306 family.

This Serratia proteamaculans (strain 568) protein is UPF0306 protein Spro_0510.